Reading from the N-terminus, the 354-residue chain is Deubiquitination-protection protein dph1 (354 aa).

Residues 1-78 (MTNISLTIKA…SIHLVKTLGQ (78 aa)) enclose the Ubiquitin-like domain. Residues 309–353 (PPEERYAEQLSQLNEMGFVDFERNVQALRRSGGNVQGAIESLLSD) form the UBA domain.

Its function is as follows. Protects ubiquitin chains against dissambly by deubiquitinating enzymes thereby promoting protein degradation. The sequence is that of Deubiquitination-protection protein dph1 (dph1) from Schizosaccharomyces pombe (strain 972 / ATCC 24843) (Fission yeast).